The following is a 110-amino-acid chain: Putative pterin-4-alpha-carbinolamine dehydratase (110 aa).

Belongs to the pterin-4-alpha-carbinolamine dehydratase family.

It carries out the reaction (4aS,6R)-4a-hydroxy-L-erythro-5,6,7,8-tetrahydrobiopterin = (6R)-L-erythro-6,7-dihydrobiopterin + H2O. The polypeptide is Putative pterin-4-alpha-carbinolamine dehydratase (Vibrio vulnificus (strain CMCP6)).